Reading from the N-terminus, the 98-residue chain is Large ribosomal subunit protein bL25 (98 aa).

Positions 1-22 (MANFVLNATARNEDKQGKGASR) are disordered.

This sequence belongs to the bacterial ribosomal protein bL25 family. Part of the 50S ribosomal subunit; part of the 5S rRNA/L5/L18/L25 subcomplex. Contacts the 5S rRNA. Binds to the 5S rRNA independently of L5 and L18.

Functionally, this is one of the proteins that binds to the 5S RNA in the ribosome where it forms part of the central protuberance. The sequence is that of Large ribosomal subunit protein bL25 from Acinetobacter baylyi (strain ATCC 33305 / BD413 / ADP1).